The sequence spans 244 residues: CTD nuclear envelope phosphatase 1 (244 aa).

The chain crosses the membrane as a helical span at residues 7–29 (LLGLRGFVAFAAKLWSFVLYLLR). Residues 57–224 (SQVKRKVLVL…LNLLPMLDAL (168 aa)) form the FCP1 homology domain.

It belongs to the dullard family. In terms of assembly, interacts with bmpr1a, bmpr1b and bmpr2.

It localises to the membrane. It is found in the cytoplasm. Its subcellular location is the perinuclear region. It catalyses the reaction O-phospho-L-seryl-[protein] + H2O = L-seryl-[protein] + phosphate. It carries out the reaction O-phospho-L-threonyl-[protein] + H2O = L-threonyl-[protein] + phosphate. In terms of biological role, serine/threonine protein phosphatase that may dephosphorylate and activate lipins. Lipins are phosphatidate phosphatases that catalyze the conversion of phosphatidic acid to diacylglycerol and control the metabolism of fatty acids at different levels. May indirectly modulate the lipid composition of nuclear and/or endoplasmic reticulum membranes and be required for proper nuclear membrane morphology and/or dynamics. May also indirectly regulate the production of lipid droplets and triacylglycerol. Induces neuronal differentiation by antagonizing BMP signaling. Acts both by dephosphorylating BMPR1A and by promoting BMPR2 proteasomal degradation. The polypeptide is CTD nuclear envelope phosphatase 1 (ctdnep1) (Xenopus tropicalis (Western clawed frog)).